The chain runs to 122 residues: High-potential iron-sulfur protein (122 aa).

Positions 1–37 (MSDKPISKSRRDAVKVMLGTAAAIPMINLVGFGTARA) are cleaved as a signal peptide. [4Fe-4S] cluster contacts are provided by cysteine 80, cysteine 83, cysteine 100, and cysteine 114.

Belongs to the high-potential iron-sulfur protein (HiPIP) family. In terms of assembly, homodimer.

The protein localises to the periplasm. Specific class of high-redox-potential 4Fe-4S ferredoxins. Functions in anaerobic electron transport in most purple and in some other photosynthetic bacteria and in at least one genus (Paracoccus) of halophilic, denitrifying bacteria. This chain is High-potential iron-sulfur protein (hip), found in Allochromatium vinosum (strain ATCC 17899 / DSM 180 / NBRC 103801 / NCIMB 10441 / D) (Chromatium vinosum).